A 165-amino-acid chain; its full sequence is SsrA-binding protein (165 aa).

The tract at residues 141–165 is disordered; that stretch reads KLHDKRQEEKRKQADREVKSALARY. A compositionally biased stretch (basic and acidic residues) spans 145 to 159; the sequence is KRQEEKRKQADREVK.

It belongs to the SmpB family.

Its subcellular location is the cytoplasm. Required for rescue of stalled ribosomes mediated by trans-translation. Binds to transfer-messenger RNA (tmRNA), required for stable association of tmRNA with ribosomes. tmRNA and SmpB together mimic tRNA shape, replacing the anticodon stem-loop with SmpB. tmRNA is encoded by the ssrA gene; the 2 termini fold to resemble tRNA(Ala) and it encodes a 'tag peptide', a short internal open reading frame. During trans-translation Ala-aminoacylated tmRNA acts like a tRNA, entering the A-site of stalled ribosomes, displacing the stalled mRNA. The ribosome then switches to translate the ORF on the tmRNA; the nascent peptide is terminated with the 'tag peptide' encoded by the tmRNA and targeted for degradation. The ribosome is freed to recommence translation, which seems to be the essential function of trans-translation. This is SsrA-binding protein from Prochlorococcus marinus (strain MIT 9303).